The chain runs to 96 residues: Small ribosomal subunit protein bS6 (96 aa).

It belongs to the bacterial ribosomal protein bS6 family.

Its function is as follows. Binds together with bS18 to 16S ribosomal RNA. This is Small ribosomal subunit protein bS6 from Acidothermus cellulolyticus (strain ATCC 43068 / DSM 8971 / 11B).